A 159-amino-acid chain; its full sequence is Large ribosomal subunit protein mL43 (159 aa).

Residues 123–159 form a disordered region; the sequence is SPSIQGQWHPFTNKPTALGGLRPREVQNPAPTQRPAQ.

Belongs to the mitochondrion-specific ribosomal protein mL43 family. Component of the mitochondrial ribosome large subunit (39S) which comprises a 16S rRNA and about 50 distinct proteins.

It localises to the mitochondrion. This chain is Large ribosomal subunit protein mL43 (MRPL43), found in Bos taurus (Bovine).